Consider the following 230-residue polypeptide: Cytidylate kinase (230 aa).

12-20 (GPSGAGKGT) is an ATP binding site.

It belongs to the cytidylate kinase family. Type 1 subfamily.

Its subcellular location is the cytoplasm. It catalyses the reaction CMP + ATP = CDP + ADP. The catalysed reaction is dCMP + ATP = dCDP + ADP. The chain is Cytidylate kinase from Shewanella sp. (strain MR-7).